A 51-amino-acid chain; its full sequence is Glutamate dehydrogenase (51 aa).

Lys-31 provides a ligand contact to substrate.

It belongs to the Glu/Leu/Phe/Val dehydrogenases family. Homohexamer.

Its subcellular location is the mitochondrion matrix. It carries out the reaction L-glutamate + NAD(+) + H2O = 2-oxoglutarate + NH4(+) + NADH + H(+). It catalyses the reaction L-glutamate + NADP(+) + H2O = 2-oxoglutarate + NH4(+) + NADPH + H(+). Mitochondrial glutamate dehydrogenase that converts L-glutamate into alpha-ketoglutarate. Plays a key role in glutamine anaplerosis by producing alpha-ketoglutarate, an important intermediate in the tricarboxylic acid cycle. The chain is Glutamate dehydrogenase from Electrophorus electricus (Electric eel).